The sequence spans 339 residues: 5-dehydro-2-deoxygluconokinase (339 aa).

The protein belongs to the carbohydrate kinase PfkB family.

The enzyme catalyses 5-dehydro-2-deoxy-D-gluconate + ATP = 6-phospho-5-dehydro-2-deoxy-D-gluconate + ADP + H(+). Its pathway is polyol metabolism; myo-inositol degradation into acetyl-CoA; acetyl-CoA from myo-inositol: step 5/7. Catalyzes the phosphorylation of 5-dehydro-2-deoxy-D-gluconate (2-deoxy-5-keto-D-gluconate or DKG) to 6-phospho-5-dehydro-2-deoxy-D-gluconate (DKGP). The polypeptide is 5-dehydro-2-deoxygluconokinase (Clostridium beijerinckii (strain ATCC 51743 / NCIMB 8052) (Clostridium acetobutylicum)).